We begin with the raw amino-acid sequence, 461 residues long: Protein DVR-1 homolog (461 aa).

An N-terminal signal peptide occupies residues 1 to 30 (MEYSRKTYLDLNIMAKYILILSLFFGPGLS). Positions 31-338 (WDVFYSGDED…QKKGGKRPRK (308 aa)) are excised as a propeptide. N-linked (GlcNAc...) asparagine glycosylation is present at Asn-149. Residues 317–351 (SHLRRNRRAATRQKKGGKRPRKPDTDNDIASRDSA) are disordered. Basic residues predominate over residues 318–337 (HLRRNRRAATRQKKGGKRPR). A compositionally biased stretch (basic and acidic residues) spans 338–347 (KPDTDNDIAS). 3 cysteine pairs are disulfide-bonded: Cys-360/Cys-426, Cys-389/Cys-458, and Cys-393/Cys-460. A glycan (N-linked (GlcNAc...) asparagine) is linked at Asn-402.

Belongs to the TGF-beta family. As to quaternary structure, homodimer; disulfide-linked.

The protein resides in the secreted. The chain is Protein DVR-1 homolog (DVR1) from Strongylocentrotus purpuratus (Purple sea urchin).